We begin with the raw amino-acid sequence, 202 residues long: CASP-like protein 2B1 (202 aa).

Residues 1–29 (MSYLGVGVSPGNVPVYHGTNLKVVDRRVR) are Cytoplasmic-facing. Residues 30–50 (LAELVLRCVICGLGILAAVLV) traverse the membrane as a helical segment. Topologically, residues 51-72 (GTDTQVKVIFTIQKKAKFTDMK) are extracellular. Residues 73–93 (ALVFLVIANGIAAAYSLIQGL) form a helical membrane-spanning segment. At 94–109 (RCVVSMVRGSVLFSKP) the chain is on the cytoplasmic side. Residues 110-130 (LAWAIFSGDQVIAYLTLAAVA) traverse the membrane as a helical segment. At 131 to 164 (AAAQSSVFGEFGQPELQWMKICNMYGKFCNQVGE) the chain is on the extracellular side. A helical transmembrane segment spans residues 165–185 (GIVSAVGVSLSMVILSGISAF). The Cytoplasmic segment spans residues 186–202 (SLFRLYGGNKGTSGGRW).

The protein belongs to the Casparian strip membrane proteins (CASP) family. As to quaternary structure, homodimer and heterodimers.

It is found in the cell membrane. This is CASP-like protein 2B1 from Vitis vinifera (Grape).